We begin with the raw amino-acid sequence, 348 residues long: Uroporphyrinogen decarboxylase (348 aa).

Substrate contacts are provided by residues 23 to 27 (RQAGR), Asp-72, Tyr-148, Ser-203, and His-316.

The protein belongs to the uroporphyrinogen decarboxylase family. Homodimer.

The protein resides in the cytoplasm. It carries out the reaction uroporphyrinogen III + 4 H(+) = coproporphyrinogen III + 4 CO2. The protein operates within porphyrin-containing compound metabolism; protoporphyrin-IX biosynthesis; coproporphyrinogen-III from 5-aminolevulinate: step 4/4. Catalyzes the decarboxylation of four acetate groups of uroporphyrinogen-III to yield coproporphyrinogen-III. The chain is Uroporphyrinogen decarboxylase from Myxococcus xanthus (strain DK1622).